The following is a 128-amino-acid chain: Nitrogen fixation nifHD region GlnB-like protein 2 (128 aa).

This sequence belongs to the P(II) protein family.

Could be involved in the regulation of nitrogen fixation. The sequence is that of Nitrogen fixation nifHD region GlnB-like protein 2 (glnBB) from Methanothermococcus thermolithotrophicus (Methanococcus thermolithotrophicus).